Here is a 483-residue protein sequence, read N- to C-terminus: Glutamate--tRNA ligase (483 aa).

The 'HIGH' region signature appears at 9–19 (PSPTGFLHIGN). Residues 253–257 (KLSKR) carry the 'KMSKS' region motif. An ATP-binding site is contributed by Lys256.

It belongs to the class-I aminoacyl-tRNA synthetase family. Glutamate--tRNA ligase type 1 subfamily. In terms of assembly, monomer.

It is found in the cytoplasm. The enzyme catalyses tRNA(Glu) + L-glutamate + ATP = L-glutamyl-tRNA(Glu) + AMP + diphosphate. In terms of biological role, catalyzes the attachment of glutamate to tRNA(Glu) in a two-step reaction: glutamate is first activated by ATP to form Glu-AMP and then transferred to the acceptor end of tRNA(Glu). This is Glutamate--tRNA ligase from Mycoplasma capricolum subsp. capricolum (strain California kid / ATCC 27343 / NCTC 10154).